We begin with the raw amino-acid sequence, 62 residues long: Small ribosomal subunit protein uS14 (62 aa).

The Zn(2+) site is built by Cys25, Cys28, Cys41, and Cys44.

It belongs to the universal ribosomal protein uS14 family. Zinc-binding uS14 subfamily. In terms of assembly, part of the 30S ribosomal subunit. Contacts proteins S3 and S10. It depends on Zn(2+) as a cofactor.

Binds 16S rRNA, required for the assembly of 30S particles and may also be responsible for determining the conformation of the 16S rRNA at the A site. This Hydrogenobaculum sp. (strain Y04AAS1) protein is Small ribosomal subunit protein uS14.